A 76-amino-acid chain; its full sequence is Horsegram inhibitor 1 (76 aa).

7 cysteine pairs are disulfide-bonded: C16-C70, C17-C32, C20-C66, C22-C30, C40-C47, C44-C59, and C49-C57.

This sequence belongs to the Bowman-Birk serine protease inhibitor family. HGI-III exists in a state of equilibrium between monomer, homodimer and trimer, with homodimer being the predominant form. The homodimer is stabilized by the non-covalent interaction between Lys-24 of one subunit and Asp-76 of the other subunit. The homodimer is more thermostable than the monomer. HGGI-I, HGGI-II and HGGI-III exist as monomers. In terms of processing, HGGI-I, HGGI-II and HGGI-III are produced by proteolysis of the N- and C-termini of HGI-III.

Its function is as follows. Inhibitors of trypsin and chymotrypsin. HGGI-III has a higher activity than HGGI-I or HGGI-II. The chain is Horsegram inhibitor 1 from Vigna unguiculata subsp. cylindrica (Horse gram).